The chain runs to 508 residues: MFS-type transporter penM (508 aa).

Residues methionine 1–leucine 60 form a disordered region. The span at aspartate 35–asparagine 46 shows a compositional bias: basic and acidic residues. N-linked (GlcNAc...) asparagine glycosylation is present at asparagine 61. A helical membrane pass occupies residues serine 73 to glycine 93. Residue asparagine 100 is glycosylated (N-linked (GlcNAc...) asparagine). The next 6 helical transmembrane spans lie at serine 108–leucine 128, isoleucine 143–valine 163, phenylalanine 166–methionine 186, alanine 197–leucine 217, tryptophan 225–isoleucine 245, and proline 299–phenylalanine 319. Residues lysine 293–tyrosine 307 carry the Peroxisomal targeting signal motif. Asparagine 331 carries an N-linked (GlcNAc...) asparagine glycan. The next 5 membrane-spanning stretches (helical) occupy residues glycine 335 to isoleucine 355, leucine 379 to threonine 399, isoleucine 407 to valine 427, phenylalanine 435 to leucine 457, and serine 475 to glycine 495.

The protein belongs to the major facilitator superfamily.

The protein localises to the peroxisome membrane. MFS-type transporter involved in penicillin production, most likely through the translocation of isopenicillin N from the cytosol to the peroxisomal lumen across the peroxisomal membrane. The chain is MFS-type transporter penM from Penicillium rubens (strain ATCC 28089 / DSM 1075 / NRRL 1951 / Wisconsin 54-1255) (Penicillium chrysogenum).